The sequence spans 376 residues: Queuine tRNA-ribosyltransferase (376 aa).

Aspartate 93 acts as the Proton acceptor in catalysis. Substrate-binding positions include 93–97 (DSGGF), aspartate 147, glutamine 190, and glycine 217. Residues 248–254 (GVGTPDD) form an RNA binding region. Residue aspartate 267 is the Nucleophile of the active site. The RNA binding; important for wobble base 34 recognition stretch occupies residues 272–276 (TRAGR).

It belongs to the queuine tRNA-ribosyltransferase family. In terms of assembly, homodimer. Within each dimer, one monomer is responsible for RNA recognition and catalysis, while the other monomer binds to the replacement base PreQ1.

The catalysed reaction is 7-aminomethyl-7-carbaguanine + guanosine(34) in tRNA = 7-aminomethyl-7-carbaguanosine(34) in tRNA + guanine. Its pathway is tRNA modification; tRNA-queuosine biosynthesis. Catalyzes the base-exchange of a guanine (G) residue with the queuine precursor 7-aminomethyl-7-deazaguanine (PreQ1) at position 34 (anticodon wobble position) in tRNAs with GU(N) anticodons (tRNA-Asp, -Asn, -His and -Tyr). Catalysis occurs through a double-displacement mechanism. The nucleophile active site attacks the C1' of nucleotide 34 to detach the guanine base from the RNA, forming a covalent enzyme-RNA intermediate. The proton acceptor active site deprotonates the incoming PreQ1, allowing a nucleophilic attack on the C1' of the ribose to form the product. After dissociation, two additional enzymatic reactions on the tRNA convert PreQ1 to queuine (Q), resulting in the hypermodified nucleoside queuosine (7-(((4,5-cis-dihydroxy-2-cyclopenten-1-yl)amino)methyl)-7-deazaguanosine). The sequence is that of Queuine tRNA-ribosyltransferase from Mesorhizobium japonicum (strain LMG 29417 / CECT 9101 / MAFF 303099) (Mesorhizobium loti (strain MAFF 303099)).